A 370-amino-acid chain; its full sequence is Allatostatins (370 aa).

The first 27 residues, 1–27 (MSGPRTCFCLPSALVLVLLSLSTSALG), serve as a signal peptide directing secretion. The propeptide occupies 28-65 (TAPEPSGVHEESPAGGGTDLLPHPEDLSASDNPDLEFV). The disordered stretch occupies residues 29 to 58 (APEPSGVHEESPAGGGTDLLPHPEDLSASD). Residues Leu73, Leu94, Leu105, and Leu117 each carry the leucine amide modification. A propeptide spanning residues 121-151 (DYDYYGEEDEDDQQAIGDEDIEESDVGDLMD) is cleaved from the precursor. Leu161, Leu172, Leu188, Leu200, Leu213, and Leu232 each carry leucine amide. Positions 236 to 251 (SDDIDFRELEEKFAED) are excised as a propeptide. Position 264 is a leucine amide (Leu264). The propeptide occupies 268-345 (EVEPSELEAV…ITPEEFSRMV (78 aa)). The interval 273–298 (ELEAVRNEEKDNSSVHDKKNNTNDMH) is disordered. The residue at position 353 (Leu353) is a Leucine amide. Ile364 carries the isoleucine amide modification. The propeptide occupies 368–370 (SER).

The protein belongs to the allatostatin family. Brain, subesophageal ganglion and corpus allatum.

The protein resides in the secreted. In terms of biological role, neuropeptide inhibitors of juvenile hormone synthesis and gut muscle contraction. The sequence is that of Allatostatins from Diploptera punctata (Pacific beetle cockroach).